A 543-amino-acid polypeptide reads, in one-letter code: ADIPOR-like receptor IZH3 (543 aa).

Residues 1 to 259 (MMDSSSKSLT…NWYGWHNETS (259 aa)) are Lumenal-facing. N-linked (GlcNAc...) asparagine glycans are attached at residues Asn-45, Asn-123, Asn-153, and Asn-256. A helical membrane pass occupies residues 260 to 280 (NIWSHLLGAIYIIYLAIYDFP). Residues 281–295 (QSEVWRNSQVPPQAR) are Cytoplasmic-facing. Residues 296 to 316 (WIVFMFLAAALKCMLSSVFWH) traverse the membrane as a helical segment. The Lumenal portion of the chain corresponds to 317–330 (TFNGTSFLKLRSKF). Asn-319 is a glycosylation site (N-linked (GlcNAc...) asparagine). A helical transmembrane segment spans residues 331 to 353 (ACVDYSGITILITASILTTEFVT). The Cytoplasmic portion of the chain corresponds to 354–357 (MYSC). A helical transmembrane segment spans residues 358-378 (YWAMYTYMSISLALGVFGVFM). Residues 379 to 395 (NWSPRFDRPEARPLRIR) are Lumenal-facing. Residues 396–416 (FFILLATMGVLSFLHLIFLTD) form a helical membrane-spanning segment. Over 417-425 (LHYAATLFS) the chain is Cytoplasmic. The chain crosses the membrane as a helical span at residues 426–446 (PVTYKSVVWYLVGVVFYGSFI). The Lumenal portion of the chain corresponds to 447–505 (PERFRSDVQVDKTIPTNYELSTDLEIITKQREIHFREVPTAHSKCSSCPSHAKSFKSLW). Residues 506–526 (WVDYFGCSHTFWHFFVVLGVI) traverse the membrane as a helical segment. At 527 to 543 (GHYRAILDMFAKRWILS) the chain is on the cytoplasmic side.

It belongs to the ADIPOR family.

The protein localises to the endoplasmic reticulum membrane. ADIPOR-like receptor involved in zinc metabolism either by altering membrane sterol content or by directly altering cellular zinc levels. The sequence is that of ADIPOR-like receptor IZH3 (IZH3) from Saccharomyces cerevisiae (strain ATCC 204508 / S288c) (Baker's yeast).